Consider the following 282-residue polypeptide: NADPH-dependent 7-cyano-7-deazaguanine reductase (282 aa).

Ile88–Ser90 serves as a coordination point for substrate. Ser90–Lys91 contributes to the NADPH binding site. The active-site Thioimide intermediate is the Cys190. Asp197 acts as the Proton donor in catalysis. His229–Glu230 is a binding site for substrate. An NADPH-binding site is contributed by Arg258–Gly259.

Belongs to the GTP cyclohydrolase I family. QueF type 2 subfamily. Homodimer.

The protein resides in the cytoplasm. It carries out the reaction 7-aminomethyl-7-carbaguanine + 2 NADP(+) = 7-cyano-7-deazaguanine + 2 NADPH + 3 H(+). It functions in the pathway tRNA modification; tRNA-queuosine biosynthesis. Functionally, catalyzes the NADPH-dependent reduction of 7-cyano-7-deazaguanine (preQ0) to 7-aminomethyl-7-deazaguanine (preQ1). This Escherichia coli O17:K52:H18 (strain UMN026 / ExPEC) protein is NADPH-dependent 7-cyano-7-deazaguanine reductase.